The sequence spans 570 residues: Ferroportin (570 aa).

The Cytoplasmic portion of the chain corresponds to 1–23; that stretch reads MTKARDQTHQEGCCGSLANYLTS. The helical transmembrane segment at 24–53 threads the bilayer; the sequence is AKFLLYLGHSLSTWGDRMWHFAVSVFLVEL. Fe cation contacts are provided by D39 and H43. The Extracellular portion of the chain corresponds to 54–57; it reads YGNS. Residues 58–84 traverse the membrane as a helical segment; sequence LLLTAVYGLVVAGSVLVLGAIIGDWVD. Residues 85–87 are Cytoplasmic-facing; that stretch reads KNA. A helical membrane pass occupies residues 88–118; the sequence is RLKVAQTSLVVQNVSVILCGIILMMVFLHKN. At 119–126 the chain is on the extracellular side; it reads ELLTMYHG. A helical membrane pass occupies residues 127–162; the sequence is WVLTVCYILIITIANIANLASTATAITIQRDWIVVV. The Cytoplasmic segment spans residues 163-164; the sequence is AG. A helical transmembrane segment spans residues 165–195; the sequence is ENRSRLADMNATIRRIDQLTNILAPMAVGQI. The Extracellular segment spans residues 196–202; sequence MTFGSPV. Residues 203 to 229 form a helical membrane-spanning segment; it reads IGCGFISGWNLVSMCVEYFLLWKVYQK. Residues 230-306 are Cytoplasmic-facing; that stretch reads TPALAVKAAL…DGWVSYYNQP (77 aa). Residues 307–333 traverse the membrane as a helical segment; the sequence is VFLAGMGLAFLYMTVLGFDCITTGYAY. C326 serves as a coordination point for Fe cation. Over 334 to 338 the chain is Extracellular; sequence TQGLS. Residues 339–366 form a helical membrane-spanning segment; sequence GSILSILMGASAITGIMGTVAFTWLRRK. The Cytoplasmic portion of the chain corresponds to 367 to 368; that stretch reads CG. The helical transmembrane segment at 369–391 threads the bilayer; sequence LVRTGLFSGLAQLSCLILCVISV. The Extracellular portion of the chain corresponds to 392–452; sequence FMPGSPLDLS…EMSTKPIPIV (61 aa). N437 is a glycosylation site (N-linked (GlcNAc...) asparagine). A helical transmembrane segment spans residues 453-482; it reads SVSLLFAGVIAARIGLWSFDLTVTQLLQEN. Topologically, residues 483–487 are cytoplasmic; it reads VIESE. A helical membrane pass occupies residues 488–512; sequence RGIINGVQNSMNYLLDLLHFIMVIL. H506 is a binding site for Fe cation. The Extracellular segment spans residues 513–515; it reads APN. A helical transmembrane segment spans residues 516–541; sequence PEAFGLLVLISVSFVAMGHLMYFRFA. The Cytoplasmic portion of the chain corresponds to 542 to 570; the sequence is QKTLGNQIFVCGPDEKEVTDENQPNTSVV.

It belongs to the ferroportin (FP) (TC 2.A.100) family. SLC40A subfamily. Identified in a complex with STOM. Interacts with HAMP; affinity of the peptide hormone HAMP for SLC40A1 increases by 80-fold in the presence of iron and the interaction promotes SLC40A1 ubiquitination and degradation. Part of a complex composed of SLC40A1/ferroportin, TF/transferrin and HEPH/hephaestin that transfers iron from cells to transferrin. In terms of processing, polyubiquitinated by RNF217; leading to proteasomal degradation. Under conditions of high systemic iron levels, both the hormone peptide hepcidin/HAMP and holo(iron bound)-transferrin/TF induce the ubiquitination, internalization and proteasomal degradation of SLC40A1 to control iron release from cells. As to expression, high expression in spleen, liver, kidney, heart and duodenum.

It localises to the cell membrane. It is found in the basolateral cell membrane. It carries out the reaction Fe(2+)(in) = Fe(2+)(out). In terms of biological role, transports Fe(2+) from the inside of a cell to the outside of the cell, playing a key role for maintaining systemic iron homeostasis. Transports iron from intestinal, splenic, hepatic cells, macrophages and erythrocytes into the blood to provide iron to other tissues. Controls therefore dietary iron uptake, iron recycling by macrophages and erythrocytes, and release of iron stores in hepatocytes. When iron is in excess in serum, circulating HAMP/hepcidin levels increase resulting in a degradation of SLC40A1, thus limiting the iron efflux to plasma. The chain is Ferroportin from Mus musculus (Mouse).